Reading from the N-terminus, the 438-residue chain is UDP-N-acetylmuramate--L-alanine ligase (438 aa).

108 to 114 (GAHGKTS) contributes to the ATP binding site.

Belongs to the MurCDEF family.

It localises to the cytoplasm. It catalyses the reaction UDP-N-acetyl-alpha-D-muramate + L-alanine + ATP = UDP-N-acetyl-alpha-D-muramoyl-L-alanine + ADP + phosphate + H(+). The protein operates within cell wall biogenesis; peptidoglycan biosynthesis. In terms of biological role, cell wall formation. In Oceanobacillus iheyensis (strain DSM 14371 / CIP 107618 / JCM 11309 / KCTC 3954 / HTE831), this protein is UDP-N-acetylmuramate--L-alanine ligase.